A 510-amino-acid chain; its full sequence is D-allose import ATP-binding protein AlsA (510 aa).

2 consecutive ABC transporter domains span residues 6-245 (ISMA…VGRE) and 260-509 (LAHE…ALPQ). 38-45 (GENGAGKS) provides a ligand contact to ATP.

It belongs to the ABC transporter superfamily. D-allose importer (TC 3.A.1.2.6) family. As to quaternary structure, the complex is composed of two ATP-binding proteins (AlsA), two transmembrane proteins (AlsC) and a solute-binding protein (AlsB).

Its subcellular location is the cell inner membrane. The enzyme catalyses D-allose(out) + ATP + H2O = D-allose(in) + ADP + phosphate + H(+). Part of the ABC transporter complex AlsBAC involved in D-allose import. Probably responsible for energy coupling to the transport system. The sequence is that of D-allose import ATP-binding protein AlsA (alsA) from Escherichia coli (strain K12).